We begin with the raw amino-acid sequence, 99 residues long: uncharacterized protein (99 aa).

The interval Met-1–Phe-99 is disordered. The span at Gln-19–Glu-29 shows a compositional bias: polar residues.

This is an uncharacterized protein from Schizosaccharomyces pombe (strain 972 / ATCC 24843) (Fission yeast).